We begin with the raw amino-acid sequence, 239 residues long: Ribonuclease HII (239 aa).

In terms of domain architecture, RNase H type-2 spans 18–231 (KIIVGLDEAG…SKNLLKEIEE (214 aa)). Residues Asp24, Glu25, and Asp125 each coordinate a divalent metal cation.

It belongs to the RNase HII family. The cofactor is Mn(2+). Mg(2+) is required as a cofactor.

It is found in the cytoplasm. The enzyme catalyses Endonucleolytic cleavage to 5'-phosphomonoester.. Endonuclease that specifically degrades the RNA of RNA-DNA hybrids. This is Ribonuclease HII from Methanococcus maripaludis (strain C7 / ATCC BAA-1331).